Reading from the N-terminus, the 294-residue chain is Shikimate dehydrogenase (NADP(+)) (294 aa).

Shikimate is bound by residues 25 to 27 and T72; that span reads SAS. K76 functions as the Proton acceptor in the catalytic mechanism. Shikimate-binding residues include N97 and D112. Residues 136 to 140 and T234 contribute to the NADP(+) site; that span reads GAGGA. Residue Y236 coordinates shikimate. An NADP(+)-binding site is contributed by G257.

It belongs to the shikimate dehydrogenase family. Homodimer.

It catalyses the reaction shikimate + NADP(+) = 3-dehydroshikimate + NADPH + H(+). The protein operates within metabolic intermediate biosynthesis; chorismate biosynthesis; chorismate from D-erythrose 4-phosphate and phosphoenolpyruvate: step 4/7. Functionally, involved in the biosynthesis of the chorismate, which leads to the biosynthesis of aromatic amino acids. Catalyzes the reversible NADPH linked reduction of 3-dehydroshikimate (DHSA) to yield shikimate (SA). This chain is Shikimate dehydrogenase (NADP(+)), found in Symbiobacterium thermophilum (strain DSM 24528 / JCM 14929 / IAM 14863 / T).